The following is a 63-amino-acid chain: Large ribosomal subunit protein uL29 (63 aa).

This sequence belongs to the universal ribosomal protein uL29 family.

This chain is Large ribosomal subunit protein uL29, found in Vibrio parahaemolyticus serotype O3:K6 (strain RIMD 2210633).